The following is a 360-amino-acid chain: Histidinol-phosphate aminotransferase (360 aa).

An N6-(pyridoxal phosphate)lysine modification is found at lysine 221.

Belongs to the class-II pyridoxal-phosphate-dependent aminotransferase family. Histidinol-phosphate aminotransferase subfamily. As to quaternary structure, homodimer. It depends on pyridoxal 5'-phosphate as a cofactor.

The catalysed reaction is L-histidinol phosphate + 2-oxoglutarate = 3-(imidazol-4-yl)-2-oxopropyl phosphate + L-glutamate. It participates in amino-acid biosynthesis; L-histidine biosynthesis; L-histidine from 5-phospho-alpha-D-ribose 1-diphosphate: step 7/9. The protein is Histidinol-phosphate aminotransferase of Desulfitobacterium hafniense (strain Y51).